Reading from the N-terminus, the 394-residue chain is Trans-enoyl reductase fumoC (394 aa).

62 to 65 (VDGK) is a binding site for NADP(+). 152–159 (ASLASVGM) is a binding site for substrate. NADP(+)-binding positions include 224–227 (SSSS), Y242, and 289–290 (LD). Residue 309 to 313 (TLTQF) coordinates substrate. Residue 378 to 379 (VK) coordinates NADP(+).

It belongs to the zinc-containing alcohol dehydrogenase family. Monomer.

It participates in secondary metabolite biosynthesis. Functionally, trans-enoyl reductase; part of the gene cluster that mediates the biosynthesis of fumosorinone, a 2-pyridone alkaloid that acts as an inhibitor of protein tyrosine phosphatase 1B which is implicated asa negative regulator of insulin receptor signaling and a potential drug target for the treatment of type II diabetes and other associated metabolic syndromes. The polyketide-amino acid backbone of fumosorinone is first assembled by the PKS-NRPS hybrid fumoS. The PKS modules condense one acetyl-CoA starter unit with 7 malonyl-CoA units, programmed C-methylations occurring after the first 3 and the sixth extensions, and cycles of full reduction occurring after the first 2 extensions. Because fumoS lacks a designated enoyl reductase (ER) domain, the required activity is provided the enoyl reductase fumoC. Upon formation of the polyketide backbone on the thiotemplate, the polyketide is transferred to the NRPS module and linked to tyrosine to produce the acyltetramic acid intermediate called prefumosorinone A. The cytochrome P450 monooxygenase fumoA then probably catalyzes an unprecedented oxidative ring expansion of prefumosorinone A to form prefumosorinone B which contains the 2-pyridone core of fumosorinone. The cytochrome P450 monooxygenase fumoB might hydroxylate the nitrogen of prefumosorinone B, but not the acyltetramic acid prefumosorinone A, to form fumosorinone. The protein is Trans-enoyl reductase fumoC of Cordyceps fumosorosea (strain ARSEF 2679) (Isaria fumosorosea).